The sequence spans 134 residues: Profilin-2 (134 aa).

Cys-13 and Cys-118 are oxidised to a cystine. The Involved in PIP2 interaction motif lies at 84–100 (AVIRGKKGSGGITIKKT). Thr-114 bears the Phosphothreonine mark.

This sequence belongs to the profilin family. In terms of assembly, occurs in many kinds of cells as a complex with monomeric actin in a 1:1 ratio. Post-translationally, phosphorylated by MAP kinases.

It localises to the cytoplasm. Its subcellular location is the cytoskeleton. Binds to actin and affects the structure of the cytoskeleton. At high concentrations, profilin prevents the polymerization of actin, whereas it enhances it at low concentrations. In Olea europaea (Common olive), this protein is Profilin-2.